We begin with the raw amino-acid sequence, 758 residues long: Vitamin K-dependent gamma-carboxylase (758 aa).

The segment at 1–21 (MAVSARSARTSPGSDKVQKDK) is disordered. The residue at position 2 (alanine 2) is an N-acetylalanine. Over 2-60 (AVSARSARTSPGSDKVQKDKAELISGPRQDSLMGKLLGFEWTDLSSWRRLVTLLNRPTD) the chain is Cytoplasmic. The helical transmembrane segment at 61 to 81 (PASLAVFRFLFGFLMVLDIPQ) threads the bilayer. Residues 82 to 113 (ERGLSSLDRKYLDGLDVCRFPLLDALRPLPLD) are Lumenal-facing. Cysteines 99 and 450 form a disulfide. The chain crosses the membrane as a helical span at residues 114-134 (WMYLVYTIMFLGALGMMLGLC). Over 135 to 136 (YR) the chain is Cytoplasmic. A helical transmembrane segment spans residues 137 to 157 (ISCVLFLLPYWYVFLLDKTSW). Residues 158 to 292 (NNHSYLYGLL…VSYFHCMNSQ (135 aa)) lie on the Lumenal side of the membrane. Residues 293 to 313 (LFSIGMFSYVMLASSPLFCSP) form a helical membrane-spanning segment. Residues 314-361 (EWPRKLVSYCPQRLQELLPLKAAPQPSVSCVYKRSRGKSGQKPGLRHQ) lie on the Cytoplasmic side of the membrane. The helical transmembrane segment at 362-382 (LGAAFTLLYLLEQLFLPYSHF) threads the bilayer. Residues 383 to 758 (LTQGYNNWTN…SNPDPVHSEF (376 aa)) lie on the Lumenal side of the membrane. The disordered stretch occupies residues 732 to 758 (GELSPSNMDSSHSNPPESNPDPVHSEF). The segment covering 735–747 (SPSNMDSSHSNPP) has biased composition (polar residues).

Belongs to the vitamin K-dependent gamma-carboxylase family. In terms of assembly, monomer. May interact with CALU.

The protein resides in the endoplasmic reticulum membrane. It carries out the reaction 4-carboxy-L-glutamyl-[protein] + 2,3-epoxyphylloquinone + H2O + H(+) = phylloquinol + L-glutamyl-[protein] + CO2 + O2. Its function is as follows. Mediates the vitamin K-dependent carboxylation of glutamate residues to calcium-binding gamma-carboxyglutamate (Gla) residues with the concomitant conversion of the reduced hydroquinone form of vitamin K to vitamin K epoxide. Catalyzes gamma-carboxylation of various proteins, such as blood coagulation factors (F2, F7, F9 and F10), osteocalcin (BGLAP) or matrix Gla protein (MGP). In Pongo abelii (Sumatran orangutan), this protein is Vitamin K-dependent gamma-carboxylase (GGCX).